The chain runs to 147 residues: Bis(5'-nucleosyl)-tetraphosphatase [asymmetrical] (147 aa).

Positions 1-139 constitute a Nudix hydrolase domain; that stretch reads MALRACGLII…EMKAALQEGH (139 aa). An N-acetylalanine modification is found at alanine 2. The Nudix box motif lies at 43-64; sequence GHVEPGEDDLETALRETQEEAG.

The protein belongs to the Nudix hydrolase family. The cofactor is a divalent metal cation.

The enzyme catalyses P(1),P(4)-bis(5'-guanosyl) tetraphosphate + H2O = GMP + GTP + 2 H(+). It catalyses the reaction a 5'-end CoA-ribonucleoside in mRNA + H2O = a 5'-end phospho-adenosine-phospho-ribonucleoside in mRNA + (R)-4'-phosphopantetheine + 2 H(+). It carries out the reaction a 5'-end FAD-phospho-ribonucleoside in mRNA + H2O = a 5'-end phospho-adenosine-phospho-ribonucleoside in mRNA + FMN + 2 H(+). In terms of biological role, catalyzes the asymmetric hydrolysis of diadenosine 5',5'''-P1,P4-tetraphosphate (Ap4A) to yield AMP and ATP. Exhibits decapping activity towards FAD-capped RNAs and dpCoA-capped RNAs in vitro. This is Bis(5'-nucleosyl)-tetraphosphatase [asymmetrical] (NUDT2) from Homo sapiens (Human).